The following is a 725-amino-acid chain: MFKVFGFGAKEEIPELSQEEKTKAILKQAHDFEQALRAMDYVLDDNADEGLALLDESDAKEASDQTINALARGVIEFLEATLGFEAEEMKKASATLAKAEALSLKSRERAQKIGLKSSSLYPPGTVYAVTYTESCLLHALLMIFSESMMEAAKAILKLRKSYYMLQEILETIKAANKAKKLKITSGSEDKESTPATFITGGDAFNSVDIPYELTPEEQKDKDLLQFAEQIHSMRTERLSGAHIGNSPAINRLRGELGLQAMEDLPEEEITDHKVLSDDIDLSQATIDEFVHSGVNLCFGILQVVISLLPPAIGAVLSVVGFRGSREEGLRLVWKATKQRNVHGCIGLLALMFYYDGPFQFTDDDFDIPAAVKDSSNSEDSEDEEMDGPTLLHPGKILEDALLQSRALFPNSALWLLNEARMLSGKGRLEEAVALMDSIDVSKIRMRQVKSLMIFDRAITLIHLHQYDRAAEDILSLLDISDWSHAFYTYFAGCCYLENWRMCEMGLMKSDKKDEYQKKAEELIFTSVNLLGKKTFKSKNLPLDRFILRKVEQFKAKKEELGVENPLDGIATSPVHEIAYFYNGYNRMSEEHLELTKKMLTEYRNPAIEALDSDQELIKDLLVSLTLRRLGHIQEGCDILDEKVLPKFFSIQNGKVKYIKKTEDPWAYPTALYERALFTWKLEGMDGLPESKEWLLRAQGYADDYELSTRVGMKIKAAIDRVDHSL.

Threonine 196 carries the post-translational modification Phosphothreonine. Phosphoserine occurs at positions 246, 377, and 380.

Belongs to the IML2 family.

It is found in the cytoplasm. The protein resides in the nucleus. The chain is IML2-like protein YKR018C from Saccharomyces cerevisiae (strain ATCC 204508 / S288c) (Baker's yeast).